The sequence spans 348 residues: Probable purine nucleoside permease C285.05 (348 aa).

Residues M1 to A21 form the signal peptide.

This sequence belongs to the NUP family.

The protein resides in the endoplasmic reticulum. Functionally, probable nucleoside permease that transports adenosine and guanosine. This chain is Probable purine nucleoside permease C285.05, found in Schizosaccharomyces pombe (strain 972 / ATCC 24843) (Fission yeast).